Here is a 434-residue protein sequence, read N- to C-terminus: Nuclear receptor subfamily 1 group I member 2 (434 aa).

Positions 38 to 107 form a DNA-binding region, nuclear receptor; that stretch reads PQICRVCGDK…RLRKCLESGM (70 aa). NR C4-type zinc fingers lie at residues 41–61 and 77–102; these read CRVC…CEGC and CPFR…LRKC. The short motif at 66–92 is the Bipartite nuclear localization signal element; that stretch reads RRAMKRNARLRCPFRKGACEITRKTRR. The interval 108 to 145 is hinge; it reads KKEMIMSDEAVEERRALIKRKKSERTGTQPLGVQGLTE. In terms of domain architecture, NR LBD spans 146–433; the sequence is EQRMMIRELM…LMQELFGITG (288 aa). Hyperforin contacts are provided by residues Ser247, 285 to 288, and His407; that span reads QLRF.

Belongs to the nuclear hormone receptor family. NR1 subfamily. As to quaternary structure, heterodimer with RXR. Interacts with NCOA1. Interacts (via domain NR LBD) with CRY1 and CRY2 in a ligand-dependent manner. In terms of tissue distribution, expressed in liver, colon and small intestine.

It is found in the nucleus. Its function is as follows. Nuclear receptor that binds and is activated by variety of endogenous and xenobiotic compounds. Transcription factor that activates the transcription of multiple genes involved in the metabolism and secretion of potentially harmful xenobiotics, drugs and endogenous compounds. Activated by the antibiotic rifampicin and various plant metabolites, such as hyperforin, guggulipid, colupulone, and isoflavones. Response to specific ligands is species-specific. Activated by naturally occurring steroids, such as pregnenolone and progesterone. Binds to a response element in the promoters of the CYP3A4 and ABCB1/MDR1 genes. This Homo sapiens (Human) protein is Nuclear receptor subfamily 1 group I member 2 (NR1I2).